The sequence spans 74 residues: MGRDTIADIITSIRNVDMNRKGTVRIESTNMAEKIVKILLREGFIENVRKHQENKKSFLVLTLRHRRNRKGPSP.

Belongs to the universal ribosomal protein uS8 family. As to quaternary structure, part of the 30S ribosomal subunit.

Its subcellular location is the plastid. It localises to the chloroplast. Functionally, one of the primary rRNA binding proteins, it binds directly to 16S rRNA central domain where it helps coordinate assembly of the platform of the 30S subunit. This Oenothera ammophila (Evening primerose) protein is Small ribosomal subunit protein uS8c (rps8).